Reading from the N-terminus, the 598-residue chain is Major royal jelly protein 5 (598 aa).

The signal sequence occupies residues 1–17; the sequence is MTTWLLLVVCLGIACQG. N-linked (GlcNAc...) asparagine glycosylation is found at asparagine 148, asparagine 164, asparagine 181, and asparagine 324.

The protein belongs to the major royal jelly protein family. As to expression, found in and secreted from the hypopharyngeal glands of the worker honey bee (at protein level); expression peaks at 8 days post eclosion. Expressed in the brains of adult worker bees peaking at 12 days post eclosion (at protein level). Expressed in the spermatheca of adult queen bees (at protein level); Expression levels are higher in mated queens than in virgin queens. Expressed in the heads of worker bees after eclosion, expression dropping with age and detectable up to 26 days of age.

The protein resides in the secreted. Functionally, component of royal jelly, a substance produced in the hypopharyngeal gland containing proteins, free amino acids, fatty acids, sugars and other nutrients, which is fed to developing larvae by worker nurse bees. Major royal jelly proteins (MRJPs) are high in essential amino acids and probably have a nutritional function in larval food. All larvae are fed some royal jelly (also known as worker jelly) early in their development but it forms the principal source of nutrition for larvae destined to become queen bees. Produced in the spermatheca of adult queen bees, along with other major royal jelly proteins, where it may act as a nutrient supply for sperm stored by mated queens, or be involved in energy metabolism. In Apis mellifera (Honeybee), this protein is Major royal jelly protein 5.